A 213-amino-acid polypeptide reads, in one-letter code: Probable nicotinate-nucleotide adenylyltransferase (213 aa).

This sequence belongs to the NadD family.

The catalysed reaction is nicotinate beta-D-ribonucleotide + ATP + H(+) = deamido-NAD(+) + diphosphate. The protein operates within cofactor biosynthesis; NAD(+) biosynthesis; deamido-NAD(+) from nicotinate D-ribonucleotide: step 1/1. Its function is as follows. Catalyzes the reversible adenylation of nicotinate mononucleotide (NaMN) to nicotinic acid adenine dinucleotide (NaAD). In Shigella boydii serotype 18 (strain CDC 3083-94 / BS512), this protein is Probable nicotinate-nucleotide adenylyltransferase.